The sequence spans 551 residues: Periplasmic [NiFe] hydrogenase large subunit (551 aa).

Residues Cys-65, Cys-68, Cys-530, and Cys-533 each contribute to the Ni(2+) site. A propeptide spanning residues 537 to 551 (VIDPESNQVHKFRIL) is cleaved from the precursor.

This sequence belongs to the [NiFe]/[NiFeSe] hydrogenase large subunit family. In terms of assembly, heterodimer of a large and a small subunit. It depends on Ni(2+) as a cofactor.

The protein resides in the periplasm. The catalysed reaction is 2 Fe(III)-[cytochrome c3] + H2 = 2 Fe(II)-[cytochrome c3] + 2 H(+). This chain is Periplasmic [NiFe] hydrogenase large subunit (hydB), found in Megalodesulfovibrio gigas (Desulfovibrio gigas).